Reading from the N-terminus, the 808-residue chain is Phenylalanine--tRNA ligase beta subunit (808 aa).

The 110-residue stretch at 40-149 folds into the tRNA-binding domain; it reads RPELDFVKIV…DQAEVGKTIR (110 aa). A B5 domain is found at 407–484; that stretch reads HKEVRIHTDI…RTKGYDTIQV (78 aa). Mg(2+) is bound by residues D462, D468, E471, and E472. The FDX-ACB domain occupies 716-808; sequence SQFPEAEIDL…LAGKNGFVLR (93 aa).

Belongs to the phenylalanyl-tRNA synthetase beta subunit family. Type 1 subfamily. As to quaternary structure, tetramer of two alpha and two beta subunits. Requires Mg(2+) as cofactor.

The protein resides in the cytoplasm. The enzyme catalyses tRNA(Phe) + L-phenylalanine + ATP = L-phenylalanyl-tRNA(Phe) + AMP + diphosphate + H(+). The chain is Phenylalanine--tRNA ligase beta subunit from Leptospira interrogans serogroup Icterohaemorrhagiae serovar copenhageni (strain Fiocruz L1-130).